A 231-amino-acid polypeptide reads, in one-letter code: Large ribosomal subunit protein uL1 (231 aa).

Belongs to the universal ribosomal protein uL1 family. Part of the 50S ribosomal subunit.

Its function is as follows. Binds directly to 23S rRNA. The L1 stalk is quite mobile in the ribosome, and is involved in E site tRNA release. In terms of biological role, protein L1 is also a translational repressor protein, it controls the translation of the L11 operon by binding to its mRNA. The chain is Large ribosomal subunit protein uL1 from Ruthia magnifica subsp. Calyptogena magnifica.